The following is a 342-amino-acid chain: S-adenosylmethionine:tRNA ribosyltransferase-isomerase (342 aa).

Belongs to the QueA family. As to quaternary structure, monomer.

The protein localises to the cytoplasm. The catalysed reaction is 7-aminomethyl-7-carbaguanosine(34) in tRNA + S-adenosyl-L-methionine = epoxyqueuosine(34) in tRNA + adenine + L-methionine + 2 H(+). It functions in the pathway tRNA modification; tRNA-queuosine biosynthesis. In terms of biological role, transfers and isomerizes the ribose moiety from AdoMet to the 7-aminomethyl group of 7-deazaguanine (preQ1-tRNA) to give epoxyqueuosine (oQ-tRNA). The chain is S-adenosylmethionine:tRNA ribosyltransferase-isomerase from Bacillus velezensis (strain DSM 23117 / BGSC 10A6 / LMG 26770 / FZB42) (Bacillus amyloliquefaciens subsp. plantarum).